Here is a 457-residue protein sequence, read N- to C-terminus: Argininosuccinate lyase (457 aa).

The protein belongs to the lyase 1 family. Argininosuccinate lyase subfamily.

Its subcellular location is the cytoplasm. The catalysed reaction is 2-(N(omega)-L-arginino)succinate = fumarate + L-arginine. Its pathway is amino-acid biosynthesis; L-arginine biosynthesis; L-arginine from L-ornithine and carbamoyl phosphate: step 3/3. The chain is Argininosuccinate lyase from Shigella dysenteriae serotype 1 (strain Sd197).